The following is a 527-amino-acid chain: Endogenous retrovirus group FC1 member 1 Env polyprotein (527 aa).

The segment at M1 to W411 is surface protein. The short motif at C280 to C283 is the CXXC element. Positions A412–L432 are fusion peptide. A transmembrane protein region spans residues A412–S527. Residues A477–T493 carry the CKS-17 motif. C494 and C501 are oxidised to a cystine. A CX6CC motif is present at residues C494–C502.

It belongs to the gamma type-C retroviral envelope protein family. HERV class-I F(c)2 env subfamily. Post-translationally, the CXXC motif is highly conserved across a broad range of retroviral envelope proteins. It is thought to participate in the formation of a labile disulfide bond possibly with the CX6CC motif present in the transmembrane domain. In terms of tissue distribution, low expression in skin and testis.

It localises to the virion. In terms of biological role, retroviral envelope proteins mediate receptor recognition and membrane fusion during early infection. Endogenous envelope proteins may have kept, lost or modified their original function during evolution. This endogenous envelope protein has lost its original fusogenic properties. The protein is Endogenous retrovirus group FC1 member 1 Env polyprotein (ERVFC1-1) of Homo sapiens (Human).